Here is a 289-residue protein sequence, read N- to C-terminus: 7-methylguanosine phosphate-specific 5'-nucleotidase (289 aa).

Aspartate 38 acts as the Nucleophile in catalysis. Mg(2+) contacts are provided by aspartate 38 and aspartate 40. Catalysis depends on aspartate 40, which acts as the Proton donor. A CMP-binding site is contributed by glutamate 85. Glutamate 85 provides a ligand contact to N(7)-methyl-GMP. Substrate contacts are provided by residues 153–154 and lysine 202; that span reads SA. Aspartate 227 contributes to the Mg(2+) binding site.

Belongs to the pyrimidine 5'-nucleotidase family. In terms of assembly, monomer.

The protein localises to the cytoplasm. The catalysed reaction is N(7)-methyl-GMP + H2O = N(7)-methylguanosine + phosphate. The enzyme catalyses CMP + H2O = cytidine + phosphate. It carries out the reaction a ribonucleoside 5'-phosphate + H2O = a ribonucleoside + phosphate. Functionally, specifically hydrolyzes 7-methylguanosine monophosphate (m(7)GMP) to 7-methylguanosine and inorganic phosphate. The specific activity for m(7)GMP may protect cells against undesired salvage of m(7)GMP and its incorporation into nucleic acids. Also has weak activity for CMP. UMP and purine nucleotides are poor substrates. The chain is 7-methylguanosine phosphate-specific 5'-nucleotidase (NT5C3B) from Gallus gallus (Chicken).